Consider the following 454-residue polypeptide: Inner membrane permease YgbN (454 aa).

A topological domain (periplasmic) is located at residue Met-1. Residues 2 to 22 form a helical membrane-spanning segment; sequence STITLLCIALAGVIMLLLLVI. Residues 23–27 are Cytoplasmic-facing; the sequence is KAKVQ. The chain crosses the membrane as a helical span at residues 28-48; that stretch reads PFVALLLVSLLVALAAGIPAG. Residues 49 to 52 lie on the Periplasmic side of the membrane; sequence EVGK. A helical transmembrane segment spans residues 53–73; it reads VMIAGMGGVLGSVTIIIGLGA. Over 74–108 the chain is Cytoplasmic; it reads MLGRMIEHSGGAESLANYFSRKLGDKRTIAALTLA. A helical transmembrane segment spans residues 109–129; it reads AFFLGIPVFFDVGFIILAPII. The Periplasmic segment spans residues 130-137; that stretch reads YGFAKVAK. A helical transmembrane segment spans residues 138 to 158; sequence ISPLKFGLPVAGIMLTVHVAV. Over 159–174 the chain is Cytoplasmic; sequence PPHPGPVAAAGLLHAD. The chain crosses the membrane as a helical span at residues 175 to 195; it reads IGWLTIIGIAISIPVGVVGYF. The Periplasmic segment spans residues 196-235; it reads AAKIINKRQYAMSVEVLEQMQLAPASEEGATKLSDKINPP. The chain crosses the membrane as a helical span at residues 236-256; it reads GVALVTSLIVIPIAIIMAGTV. Over 257–273 the chain is Cytoplasmic; that stretch reads SATLMPPSHPLLGTLQL. Residues 274–294 traverse the membrane as a helical segment; the sequence is IGSPMVALMIALVLAFWLLAL. Topologically, residues 295–305 are periplasmic; that stretch reads RRGWSLQHTSD. A helical membrane pass occupies residues 306-326; the sequence is IMGSALPTAAVVILVTGAGGV. The Cytoplasmic segment spans residues 327-341; that stretch reads FGKVLVESGVGKALA. Residues 342–362 form a helical membrane-spanning segment; it reads NMLQMIDLPLLPAAFIISLAL. At 363–383 the chain is on the periplasmic side; it reads RASQGSATVAILTTGGLLSEA. A helical transmembrane segment spans residues 384–404; sequence VMGLNPIQCVLVTLAACFGGL. Residues 405–433 are Cytoplasmic-facing; it reads GASHINDSGFWIVTKYLGLSVADGLKTWT. The helical transmembrane segment at 434 to 454 threads the bilayer; that stretch reads VLTTILGFTGFLITWCVWAVI.

The protein belongs to the GntP permease family.

It localises to the cell inner membrane. This chain is Inner membrane permease YgbN (ygbN), found in Escherichia coli (strain K12).